The primary structure comprises 326 residues: Delta-aminolevulinic acid dehydratase (326 aa).

Residues cysteine 125, cysteine 127, and cysteine 135 each coordinate Zn(2+). The Schiff-base intermediate with substrate role is filled by lysine 200. 5-aminolevulinate is bound by residues arginine 210 and arginine 222. Residue glutamate 238 participates in Mg(2+) binding. The Schiff-base intermediate with substrate role is filled by lysine 253. Position 279 (serine 279) interacts with 5-aminolevulinate.

It belongs to the ALAD family. In terms of assembly, homooctamer. It depends on Zn(2+) as a cofactor.

The catalysed reaction is 2 5-aminolevulinate = porphobilinogen + 2 H2O + H(+). Its pathway is porphyrin-containing compound metabolism; protoporphyrin-IX biosynthesis; coproporphyrinogen-III from 5-aminolevulinate: step 1/4. Functionally, catalyzes an early step in the biosynthesis of tetrapyrroles. Binds two molecules of 5-aminolevulinate per subunit, each at a distinct site, and catalyzes their condensation to form porphobilinogen. This chain is Delta-aminolevulinic acid dehydratase (hemB), found in Methanothermobacter thermautotrophicus (strain ATCC 29096 / DSM 1053 / JCM 10044 / NBRC 100330 / Delta H) (Methanobacterium thermoautotrophicum).